A 444-amino-acid chain; its full sequence is NADH-dependent flavin oxidoreductase nadA (444 aa).

Residues 37 to 40 and Gln123 contribute to the FMN site; that span reads ERMC. The segment at 127–149 is disordered; sequence PGRQTPSHRQPEPISASDVPLDT. Substrate is bound at residue 192–195; it reads HAAH. 345–346 contacts FMN; it reads AR.

This sequence belongs to the NADH:flavin oxidoreductase/NADH oxidase family.

It is found in the cytoplasm. The protein resides in the cytosol. NADH-dependent flavin oxidoreductase; part of the gene cluster that mediates the biosynthesis of aflatoxins, a group of polyketide-derived furanocoumarins, and part of the most toxic and carcinogenic compounds among the known mycotoxins. The four major aflatoxins produced by A.parasiticus are aflatoxin B1 (AFB1), aflatoxin B2 (AFB2), aflatoxin G1 (AFG1) and aflatoxin G2 (AFG2). Within the aflatoxin pathway, the NADH-dependent flavin oxidoreductase nadA is specifically required for the last steps in which OMST is converted specifically to aflatoxin G1. The biosynthesis of aflatoxins begins with the norsolorinic acid synthase aflC that combines a hexanoyl starter unit produced by the fatty acid synthase aflA/aflB and 7 malonyl-CoA extender units to synthesize the precursor NOR. The second step is the conversion of NOR to averantin and requires the norsolorinic acid ketoreductase aflD, which catalyzes the dehydration of norsolorinic acid to form (1'S)-averantin. The norsolorinic acid reductases aflE and aflF may also play a role in the conversion of NOR to AVN. The cytochrome P450 monooxygenase aflG then catalyzes the hydroxylation of AVN to 5'hydroxyaverantin (HAVN). The next step is performed by the 5'-hydroxyaverantin dehydrogenase aflH that transforms HAVN to 5'-oxoaverantin (OAVN) which is further converted to averufin (AVF) by aflK that plays a dual role in the pathway, as a 5'-oxoaverantin cyclase that mediates conversion of 5'-oxoaverantin, as well as a versicolorin B synthase in a later step in the pathway. The averufin oxidase aflI catalyzes the conversion of AVF to versiconal hemiacetal acetate (VHA). VHA is then the substrate for the versiconal hemiacetal acetate esterase aflJ to yield versiconal (VAL). Versicolorin B synthase aflK then converts VAL to versicolorin B (VERB) by closing the bisfuran ring of aflatoxin which is required for DNA-binding, thus giving to aflatoxin its activity as a mutagen. Then, the activity of the versicolorin B desaturase aflL leads to versicolorin A (VERA). A branch point starts from VERB since it can also be converted to dihydrodemethylsterigmatocystin (DMDHST), probably also by aflL, VERA being a precursor for aflatoxins B1 and G1, and DMDHST for aflatoxins B2 and G2. Next, the versicolorin reductase aflM and the cytochrome P450 monooxygenase aflN are involved in conversion of VERA to demethylsterigmatocystin (DMST). AflX and aflY seem also involved in this step, through probable aflX-mediated epoxide ring-opening step following versicolorin A oxidation and aflY-mediated Baeyer-Villiger oxidation required for the formation of the xanthone ring. The methyltransferase aflO then leads to the modification of DMST to sterigmatocystin (ST), and of DMDHST to dihydrosterigmatocystin (DHST). Both ST and DHST are then substrates of the O-methyltransferase aflP to yield O-methylsterigmatocystin (OMST) and dihydro-O-methylsterigmatocystin (DHOMST), respectively. Finally OMST is converted to aflatoxins B1 and G1, and DHOMST to aflatoxins B2 and G2, via the action of several enzymes including O-methylsterigmatocystin oxidoreductase aflQ, the cytochrome P450 monooxygenase aflU, but also the NADH-dependent flavin oxidoreductase nadA which is specifically required for the synthesis of AFG1. This Aspergillus parasiticus (strain ATCC 56775 / NRRL 5862 / SRRC 143 / SU-1) protein is NADH-dependent flavin oxidoreductase nadA.